We begin with the raw amino-acid sequence, 592 residues long: Aspartate--tRNA ligase (592 aa).

Position 173 (glutamate 173) interacts with L-aspartate. Residues 197–200 (QLFK) form an aspartate region. Residue arginine 219 coordinates L-aspartate. ATP contacts are provided by residues 219-221 (RDE) and glutamine 228. Residue histidine 448 participates in L-aspartate binding. Glutamate 482 is an ATP binding site. Arginine 489 contributes to the L-aspartate binding site. 534–537 (GLDR) lines the ATP pocket.

Belongs to the class-II aminoacyl-tRNA synthetase family. Type 1 subfamily. Homodimer.

Its subcellular location is the cytoplasm. It carries out the reaction tRNA(Asp) + L-aspartate + ATP = L-aspartyl-tRNA(Asp) + AMP + diphosphate. Its function is as follows. Catalyzes the attachment of L-aspartate to tRNA(Asp) in a two-step reaction: L-aspartate is first activated by ATP to form Asp-AMP and then transferred to the acceptor end of tRNA(Asp). The polypeptide is Aspartate--tRNA ligase (Shewanella baltica (strain OS195)).